Reading from the N-terminus, the 398-residue chain is 1-deoxy-D-xylulose 5-phosphate reductoisomerase (398 aa).

Positions 10, 11, 12, 13, and 124 each coordinate NADPH. 1-deoxy-D-xylulose 5-phosphate is bound at residue K125. Residue E126 participates in NADPH binding. A Mn(2+)-binding site is contributed by D150. 1-deoxy-D-xylulose 5-phosphate is bound by residues S151, E152, S186, and H209. Residue E152 participates in Mn(2+) binding. An NADPH-binding site is contributed by G215. Residues S222, N227, K228, and E231 each contribute to the 1-deoxy-D-xylulose 5-phosphate site. E231 contributes to the Mn(2+) binding site.

It belongs to the DXR family. Mg(2+) serves as cofactor. Requires Mn(2+) as cofactor.

The catalysed reaction is 2-C-methyl-D-erythritol 4-phosphate + NADP(+) = 1-deoxy-D-xylulose 5-phosphate + NADPH + H(+). Its pathway is isoprenoid biosynthesis; isopentenyl diphosphate biosynthesis via DXP pathway; isopentenyl diphosphate from 1-deoxy-D-xylulose 5-phosphate: step 1/6. In terms of biological role, catalyzes the NADPH-dependent rearrangement and reduction of 1-deoxy-D-xylulose-5-phosphate (DXP) to 2-C-methyl-D-erythritol 4-phosphate (MEP). This Tolumonas auensis (strain DSM 9187 / NBRC 110442 / TA 4) protein is 1-deoxy-D-xylulose 5-phosphate reductoisomerase.